The sequence spans 184 residues: MDLKEISKQTEEVIEELLDIANLKPGSLFVLGGSTSEILGKKVGTAGSLDVAKAVVDPILEAIHKRGLYLAVQGCEHINRALLVEEEAKDKYGLEEVNVIPHEHAGGSIQTYAYQQFKNPVMVENLKGLGHAGLDIGLVLIGMHLRPVVVPVRLSRNKIGEATIVAARTRPKMVGGERARYKKL.

Belongs to the UPF0340 family.

This chain is UPF0340 protein TTE0860, found in Caldanaerobacter subterraneus subsp. tengcongensis (strain DSM 15242 / JCM 11007 / NBRC 100824 / MB4) (Thermoanaerobacter tengcongensis).